The primary structure comprises 307 residues: Opsin-like protein carO (307 aa).

A glycan (N-linked (GlcNAc...) asparagine) is linked at asparagine 28. The next 7 helical transmembrane spans lie at 36 to 56, 64 to 84, 118 to 138, 140 to 160, 166 to 186, 202 to 222, and 235 to 255; these read WYWA…GLGM, IFHY…FTMA, WFLT…MPWP, VLWV…GALV, WGYF…LAWE, FVMC…AWGV, and AVFY…LLLW. A disordered region spans residues 280–307; it reads GPNNKVASGHGARNDTATASGSNVNPNA. The N-linked (GlcNAc...) asparagine glycan is linked to asparagine 293. Residues 294-307 show a composition bias toward polar residues; it reads DTATASGSNVNPNA.

Belongs to the archaeal/bacterial/fungal opsin family.

The protein resides in the membrane. Its function is as follows. Opsin-like protein; part of the car gene cluster that mediates the biosynthesis of neurosporaxanthin, a carboxylic apocarotenoid acting as an essential protective pigment and leading to orange pigmentation. The exact role of carO in carotenoid biosynthesis is not known yet, but it could be involved in the regulation of the pathway by light or other stimuli. In Fusarium fujikuroi (Bakanae and foot rot disease fungus), this protein is Opsin-like protein carO.